The following is a 794-amino-acid chain: E3 ubiquitin-protein ligase wwp-1 (794 aa).

The span at Met1–Ser16 shows a compositional bias: low complexity. 2 disordered regions span residues Met1–Lys31 and Arg155–Thr198. One can recognise a C2 domain in the interval Gln10–Asn124. Residues Asn17–Ala27 show a composition bias toward polar residues. A compositionally biased stretch (low complexity) spans Ala161–Pro186. WW domains lie at Glu219 to Thr252, Gln253 to Ala286, Gly324 to Thr358, and Gln366 to Thr399. Positions Asn460–Glu794 constitute an HECT domain. Cys762 (glycyl thioester intermediate) is an active-site residue.

Interacts (via WW domains) with Kruppel-like factor klf-1. Interacts with ubiquitin-conjugating enzyme E2 ubc-18. Expressed in neurons localized in the head and tail of adults.

The enzyme catalyses S-ubiquitinyl-[E2 ubiquitin-conjugating enzyme]-L-cysteine + [acceptor protein]-L-lysine = [E2 ubiquitin-conjugating enzyme]-L-cysteine + N(6)-ubiquitinyl-[acceptor protein]-L-lysine.. Its pathway is protein modification; protein ubiquitination. In terms of biological role, E3 ubiquitin-protein ligase which accepts ubiquitin from an E2 ubiquitin-conjugating enzyme in the form of a thioester and then directly transfers the ubiquitin to targeted substrates. Ubiquitinates klf-1. Required for diet restriction-mediated lifespan extension, acting in concert with Kruppel-like factor klf-1 in the intestine to perhaps modulate genes involved in lipid metabolism. Probably acting downstream of the Insulin/IGF-1-like signaling (IIS) mediated pathway, plays a role in the immune response to infection by the Gram-negative bacterium P.aeruginosa, at least partly in response to bacterial pore-forming toxins. In Caenorhabditis elegans, this protein is E3 ubiquitin-protein ligase wwp-1.